We begin with the raw amino-acid sequence, 506 residues long: UDP-N-acetylglucosamine--peptide N-acetylglucosaminyltransferase GtfA subunit (506 aa).

Residue 16-19 coordinates UDP; that stretch reads GVEY. His241 contributes to the N-acetyl-D-glucosamine binding site. 384-385 contacts UDP; the sequence is HK. N-acetyl-D-glucosamine is bound at residue 404–407; it reads EGFG.

It belongs to the glycosyltransferase group 1 family. Glycosyltransferase 4 subfamily. Interacts with stabilizing protein GtfB (Gtf2), probably as a heterotetramer with 2 subunits each of GtfA and GtfB, part of the accessory SecA2/SecY2 protein translocation apparatus.

The protein localises to the cytoplasm. The protein resides in the cell membrane. The enzyme catalyses L-seryl-[protein] + UDP-N-acetyl-alpha-D-glucosamine = 3-O-[N-acetyl-alpha-D-glucosaminyl]-L-seryl-[protein] + UDP + H(+). It functions in the pathway protein modification; protein glycosylation. Required for polymorphic O-glycosylation of the serine-rich repeat protein Srr2. Catalyzes the first step in glycosylation by transferring N-acetylglucosamine from UDP-GlcNAc to serine residues of Srr2. Part of the accessory SecA2/SecY2 system specifically required to export serine-rich repeat proteins, probably Srr2 in this organism. The GtfA-GtfB (Gtf1-Gtf2 in this bacteria) complex adds GlcNAc from UDP-GlcNAc to Srr2 substrate. This subunit has low glycosyltransferase activity; GtfB enhances glycosyltransferase activity in vitro. Upon expression in S.parasanguis GtfA/GtfB restores expression of serine-rich repeat protein Fap1 and complements a biofilm formation defect. In Streptococcus agalactiae, this protein is UDP-N-acetylglucosamine--peptide N-acetylglucosaminyltransferase GtfA subunit.